The sequence spans 452 residues: UDP-N-acetylmuramoylalanine--D-glutamate ligase (452 aa).

119–125 (GSNGKTT) contacts ATP.

It belongs to the MurCDEF family.

It localises to the cytoplasm. The catalysed reaction is UDP-N-acetyl-alpha-D-muramoyl-L-alanine + D-glutamate + ATP = UDP-N-acetyl-alpha-D-muramoyl-L-alanyl-D-glutamate + ADP + phosphate + H(+). The protein operates within cell wall biogenesis; peptidoglycan biosynthesis. Cell wall formation. Catalyzes the addition of glutamate to the nucleotide precursor UDP-N-acetylmuramoyl-L-alanine (UMA). The chain is UDP-N-acetylmuramoylalanine--D-glutamate ligase from Streptococcus pyogenes serotype M28 (strain MGAS6180).